Here is a 423-residue protein sequence, read N- to C-terminus: UPF0229 protein PSPA7_0730 (423 aa).

Positions 84–107 (AGEHIARPSGGGGGRGGGKASNSG) are disordered. Positions 92–102 (SGGGGGRGGGK) are enriched in gly residues.

This sequence belongs to the UPF0229 family.

This is UPF0229 protein PSPA7_0730 from Pseudomonas paraeruginosa (strain DSM 24068 / PA7) (Pseudomonas aeruginosa (strain PA7)).